We begin with the raw amino-acid sequence, 242 residues long: Probable septum site-determining protein MinC (242 aa).

This sequence belongs to the MinC family. Interacts with MinD and FtsZ.

Cell division inhibitor that blocks the formation of polar Z ring septums. Rapidly oscillates between the poles of the cell to destabilize FtsZ filaments that have formed before they mature into polar Z rings. Prevents FtsZ polymerization. The polypeptide is Probable septum site-determining protein MinC (Agrobacterium fabrum (strain C58 / ATCC 33970) (Agrobacterium tumefaciens (strain C58))).